The following is a 307-amino-acid chain: 4-hydroxythreonine-4-phosphate dehydrogenase (307 aa).

Substrate-binding residues include His121 and Thr122. The a divalent metal cation site is built by His150, His189, and His245. Substrate-binding residues include Lys253, Asn262, and Arg271.

This sequence belongs to the PdxA family. Homodimer. It depends on Zn(2+) as a cofactor. The cofactor is Mg(2+). Requires Co(2+) as cofactor.

The protein resides in the cytoplasm. It carries out the reaction 4-(phosphooxy)-L-threonine + NAD(+) = 3-amino-2-oxopropyl phosphate + CO2 + NADH. It functions in the pathway cofactor biosynthesis; pyridoxine 5'-phosphate biosynthesis; pyridoxine 5'-phosphate from D-erythrose 4-phosphate: step 4/5. Functionally, catalyzes the NAD(P)-dependent oxidation of 4-(phosphooxy)-L-threonine (HTP) into 2-amino-3-oxo-4-(phosphooxy)butyric acid which spontaneously decarboxylates to form 3-amino-2-oxopropyl phosphate (AHAP). The protein is 4-hydroxythreonine-4-phosphate dehydrogenase of Sulfurimonas denitrificans (strain ATCC 33889 / DSM 1251) (Thiomicrospira denitrificans (strain ATCC 33889 / DSM 1251)).